The sequence spans 342 residues: Glycerol-1-phosphate dehydrogenase [NAD(P)+] (342 aa).

NAD(+) contacts are provided by residues 84–88 (GRPID) and 106–109 (TAAS). Aspartate 111 serves as a coordination point for substrate. Serine 115 serves as a coordination point for NAD(+). Aspartate 160 contributes to the substrate binding site. Aspartate 160 and histidine 241 together coordinate Zn(2+). A substrate-binding site is contributed by histidine 245. Residue histidine 260 coordinates Zn(2+).

Belongs to the glycerol-1-phosphate dehydrogenase family. As to quaternary structure, homodimer. Zn(2+) is required as a cofactor.

Its subcellular location is the cytoplasm. The catalysed reaction is sn-glycerol 1-phosphate + NAD(+) = dihydroxyacetone phosphate + NADH + H(+). It carries out the reaction sn-glycerol 1-phosphate + NADP(+) = dihydroxyacetone phosphate + NADPH + H(+). It functions in the pathway membrane lipid metabolism; glycerophospholipid metabolism. Catalyzes the NAD(P)H-dependent reduction of dihydroxyacetonephosphate (DHAP or glycerone phosphate) to glycerol 1-phosphate (G1P). The G1P thus generated is used as the glycerophosphate backbone of phospholipids in the cellular membranes of Archaea. The sequence is that of Glycerol-1-phosphate dehydrogenase [NAD(P)+] from Pyrobaculum aerophilum (strain ATCC 51768 / DSM 7523 / JCM 9630 / CIP 104966 / NBRC 100827 / IM2).